A 311-amino-acid polypeptide reads, in one-letter code: Zeta-sarcoglycan (311 aa).

Topologically, residues M1 to Y50 are cytoplasmic. Residues F51 to L71 form a helical; Signal-anchor for type II membrane protein membrane-spanning segment. The Extracellular portion of the chain corresponds to K72–N311. N75 and N123 each carry an N-linked (GlcNAc...) asparagine glycan. A disulfide bridge connects residues C285 and C301.

Belongs to the sarcoglycan beta/delta/gamma/zeta family. As to expression, expressed in the heart, skeletal muscle and arterial vascular smooth muscle.

Its subcellular location is the cell membrane. The protein resides in the sarcolemma. It is found in the cytoplasm. The protein localises to the cytoskeleton. Component of the sarcoglycan complex, a subcomplex of the dystrophin-glycoprotein complex which forms a link between the F-actin cytoskeleton and the extracellular matrix. May play a role in the maintenance of striated muscle membrane stability. This chain is Zeta-sarcoglycan (Sgcz), found in Mus musculus (Mouse).